Here is a 31-residue protein sequence, read N- to C-terminus: uncharacterized protein (31 aa).

A helical transmembrane segment spans residues 7-29; sequence TVVLINFFAAVGLFTLISMRFGW.

Its subcellular location is the cell inner membrane. This is an uncharacterized protein from Escherichia coli (strain K12).